The following is a 569-amino-acid chain: Adenine deaminase (569 aa).

Belongs to the metallo-dependent hydrolases superfamily. Adenine deaminase family. Mn(2+) is required as a cofactor.

It catalyses the reaction adenine + H2O + H(+) = hypoxanthine + NH4(+). In Desulfitobacterium hafniense (strain Y51), this protein is Adenine deaminase.